We begin with the raw amino-acid sequence, 629 residues long: Dual specificity tyrosine-phosphorylation-regulated kinase 1B (629 aa).

Phosphotyrosine is present on Tyr63. Residues 67–86 form a disordered region; the sequence is KKRRAQQAPPQDSSTKKEKK. Positions 69 to 86 match the Bipartite nuclear localization signal motif; the sequence is RRAQQAPPQDSSTKKEKK. A phosphotyrosine mark is found at Tyr92 and Tyr111. A Protein kinase domain is found at 111 to 431; that stretch reads YEIDSLIGKG…PLGALQHGFF (321 aa). 117-125 contributes to the ATP binding site; that stretch reads IGKGSFGQV. Tyr129 bears the Phosphotyrosine mark. Position 140 (Lys140) interacts with ATP. Phosphotyrosine is present on Tyr171. 190 to 193 contacts ATP; sequence FELL. Asp239 acts as the Proton acceptor in catalysis. The residue at position 262 (Ser262) is a Phosphoserine. Tyr271 is modified (phosphotyrosine; by autocatalysis). Tyr273 is subject to Phosphotyrosine. Residues 380-399 form a disordered region; it reads GVQTGGPGGRRAGEPGHSPA. Tyr401 is modified (phosphotyrosine). 2 disordered regions span residues 436–480 and 496–629; these read DEAT…SNDN and PITD…AASS. Residues 438–477 are compositionally biased toward low complexity; sequence ATNTGPAGSSASTSPAPLDTCPSSSTASSISSSGGSSGSS. Positions 480 to 520 are interaction with RANBP9; sequence NRAYRYSNRYCGGPGPPITDCEMNSPQVLPSQPLRPWAGGD. 2 stretches are compositionally biased toward pro residues: residues 552–562 and 574–585; these read PPSPTSPPPPE and DCSPPPPAPAPQ. A Phosphoserine modification is found at Ser624.

This sequence belongs to the protein kinase superfamily. CMGC Ser/Thr protein kinase family. MNB/DYRK subfamily. As to quaternary structure, dimer. Interacts with DCOHM, MAP2K3/MKK3, RANBP9 and TCF1/HNF1A. Part of a complex consisting of RANBP9, RAN, DYRK1B and COPS5. Interacts with DCAF7. Interacts with RNF169. Post-translationally, phosphorylated by MAP kinase. Tyrosine phosphorylation may be required for dimerization. In terms of tissue distribution, isoform 1 and isoform 2 are broadly expressed. Isoform 3 seems specific for skeletal muscle (at protein level).

Its subcellular location is the nucleus. It is found in the nucleolus. The protein resides in the chromosome. The catalysed reaction is L-seryl-[protein] + ATP = O-phospho-L-seryl-[protein] + ADP + H(+). It carries out the reaction L-threonyl-[protein] + ATP = O-phospho-L-threonyl-[protein] + ADP + H(+). It catalyses the reaction L-tyrosyl-[protein] + ATP = O-phospho-L-tyrosyl-[protein] + ADP + H(+). Its activity is regulated as follows. Inhibited by RANBP9. Functionally, dual-specificity kinase which possesses both serine/threonine and tyrosine kinase activities. Plays an essential role in ribosomal DNA (rDNA) double-strand break repair and rDNA copy number maintenance. During DNA damage, mediates transcription silencing in part via phosphorylating and enforcing DSB accumulation of the histone methyltransferase EHMT2. Enhances the transcriptional activity of TCF1/HNF1A and FOXO1. Inhibits epithelial cell migration. Mediates colon carcinoma cell survival in mitogen-poor environments. Inhibits the SHH and WNT1 pathways, thereby enhancing adipogenesis. In addition, promotes expression of the gluconeogenic enzyme glucose-6-phosphatase catalytic subunit 1 (G6PC1). The chain is Dual specificity tyrosine-phosphorylation-regulated kinase 1B (Dyrk1b) from Mus musculus (Mouse).